A 281-amino-acid polypeptide reads, in one-letter code: Probable thioesterase gloN (281 aa).

A disordered region spans residues 207–233 (LDDGSNNSRDLNETSPTETSNDSETQA). Polar residues predominate over residues 210–232 (GSNNSRDLNETSPTETSNDSETQ).

Belongs to the AMT4 thioesterase family.

Its pathway is mycotoxin biosynthesis. Its function is as follows. Probable thioesterase; part of the gene cluster that mediates the biosynthesis of pneumocandins, lipohexapeptides of the echinocandin family that prevent fungal cell wall formation by non-competitive inhibition of beta-1,3-glucan synthase. The 10,12-dimethylmyristoyl side chain is synthesized by the reducing polyketide synthase gloL/GLPKS4. The thioesterase gloN/GLHYD exclusively interacts with gloL/GLPKS4 to maintain turnover of the polyketide side chain. The 10R,12S-dimethylmyristic acid is then transferred to the first thiolation domain of the nonribosomal peptide synthetase gloA/GLNRPS4 by the acyl-AMP ligase gloD/GLligase, followed by its acylation to L-ornithine to trigger elongation of the cyclic hexapeptide. L-ornithine, 4R-hydroxyl-L-proline (generated from L-proline by the dioxygenase gloF/GLOXY2), 3S-hydroxyl-L-homotyrosine (generated by gloG/GLHtyB, gloH/GLHtyA, gloI/GLHtyC, gloJ/GLHtyD and hydroxylated at C-3 by the dioxygenase gloM/GLOXY1), 3R-hydroxyl-L-glutamine (generated from L-glutamine probably by the dioxygenase gloE/GLOXY3) and 3S-hydroxyl-L-proline (generated from L-proline by the dioxygenase gloF/GLOXY2 to yield pneumocandin B0), or 3S-hydroxyl-4S-methyl-L-proline (generated from L-leucine by the dioxygenase gloC/GLOXY4 to yield pneumocandin A0) are sequentially added to the growing chain. The last C domain of gloA/GLNRPS4 is proposed to be responsible for cyclization by condensation to form the peptide bond between L-ornithine and 3S-hydroxyl-4S-methyl-L-proline (for pneumocandin A0) or 3S-hydroxyl-L-proline (for pneumocandin B0). Finally, the subsequent C-4 hydroxylation of 3S-hydroxyl-L-homotyrosine and L-ornithine dihydroxylation at C-4 and C-5 are performed by the cytochrome P450 monooxygenases gloP/GLP450-1 and gloO/GLP450-2, respectively. In Glarea lozoyensis (strain ATCC 20868 / MF5171), this protein is Probable thioesterase gloN.